The primary structure comprises 682 residues: 1,4-alpha-glucan-branching enzyme (682 aa).

(1,4-alpha-D-glucosyl)n-binding residues include tryptophan 88 and lysine 124. Aspartate 342 acts as the Nucleophile in catalysis. The Proton donor role is filled by glutamate 397.

The protein belongs to the glycosyl hydrolase 13 family. GlgB subfamily.

The protein resides in the cytoplasm. It carries out the reaction Transfers a segment of a (1-&gt;4)-alpha-D-glucan chain to a primary hydroxy group in a similar glucan chain.. It participates in glycan biosynthesis; glycogen biosynthesis. Glycogen-branching enzyme participates in the glycogen biosynthetic process along with glycogenin and glycogen synthase. Generates alpha-1,6-glucosidic branches from alpha-1,4-linked glucose chains, to increase solubility of the glycogen polymer. This is 1,4-alpha-glucan-branching enzyme from Cryptococcus neoformans var. grubii serotype A (strain H99 / ATCC 208821 / CBS 10515 / FGSC 9487) (Filobasidiella neoformans var. grubii).